The chain runs to 225 residues: Ribosomal RNA small subunit methyltransferase G (225 aa).

S-adenosyl-L-methionine contacts are provided by residues G84, F89, 107–109 (DST), 135–136 (AE), and R154.

Belongs to the methyltransferase superfamily. RNA methyltransferase RsmG family.

It localises to the cytoplasm. Specifically methylates the N7 position of a guanine in 16S rRNA. This is Ribosomal RNA small subunit methyltransferase G from Microcystis aeruginosa (strain NIES-843 / IAM M-2473).